Reading from the N-terminus, the 188-residue chain is MIKALVGLGNPGPKYKDTKHNIGFKVIDEVAFKLHLKNPLEKYMSIVFHIKEQDIYLIKPQTFMNNSGIALRQFVEKTKIAPSDILVIYDDMDLPIGTIKMKPNGGSGGHNGVESIIRELRTQEFPRLRIGIGRPASKEEVTNYVLSPFEYKDTPIVKKTIEKASEYAIRSLEEPLEYVMTLCNTKSS.

Tyr15 contacts tRNA. The Proton acceptor role is filled by His20. Residues Phe63, Asn65, and Asn111 each contribute to the tRNA site.

This sequence belongs to the PTH family. In terms of assembly, monomer.

The protein localises to the cytoplasm. It catalyses the reaction an N-acyl-L-alpha-aminoacyl-tRNA + H2O = an N-acyl-L-amino acid + a tRNA + H(+). Hydrolyzes ribosome-free peptidyl-tRNAs (with 1 or more amino acids incorporated), which drop off the ribosome during protein synthesis, or as a result of ribosome stalling. Functionally, catalyzes the release of premature peptidyl moieties from peptidyl-tRNA molecules trapped in stalled 50S ribosomal subunits, and thus maintains levels of free tRNAs and 50S ribosomes. This is Peptidyl-tRNA hydrolase from Hydrogenobaculum sp. (strain Y04AAS1).